Here is a 133-residue protein sequence, read N- to C-terminus: Small ribosomal subunit protein bS6 (133 aa).

A compositionally biased stretch (basic and acidic residues) spans 106 to 125 (REERVERAPRAPRPEVKAEP). A disordered region spans residues 106–133 (REERVERAPRAPRPEVKAEPEAEATAEA).

This sequence belongs to the bacterial ribosomal protein bS6 family.

In terms of biological role, binds together with bS18 to 16S ribosomal RNA. The polypeptide is Small ribosomal subunit protein bS6 (Psychromonas ingrahamii (strain DSM 17664 / CCUG 51855 / 37)).